The sequence spans 944 residues: MTVSGPGTPEPRPSDPGASSAEELRKEGNELFKCGDYEGALTAYTQALSLGATPQDQAILHRNRAACHLKLEDYSKAESEASKAIEKDGGDVKALYRRSQALEKLGRLDQAVLDLKRCVSLEPKNKVFQESLRNIGGQIQEKVRYMSSTDAKVEQMFQILLDPKEKGTEKKQKASQNLVVLAREDAGAEKIFRSNGVQLLQRLLDTGETDLMLAALRTLVGICSEHQSRTVATLSVLGTRRVVSILGVENQAVSLAACHLLQVMFDALKEGVKKGFRGKEGAIIVDPARELKVLISNLLELLTEIGVSGQGRDNALTLLIKMVPRKSPKDPNNSLTLWVIDQGLKKILEVGGSVPEAAGELTVTANSRMSASILLSKLFDDLKCDAERENFHRLCENYIRSWFEGQGLAGKLRAIQTVSCLLQGPCDAGNRALELSGVMESVIALCASEQEEEQLVAVEALIHAAGKAKRASFITANGVALLKDLYKGSERDSIRIRALVGLCKLGSAGGTDFSMKQFAEGSTLKLAKQCRKWLCNDQIDAGTRRWAVEGLAYLTFDADVKEEFVEDEAALKALFQLSRSEERSVLFAVGSALVNCTNSYDYEEPDPKMVELAKYAKQHVPEQHPKDKPSFVRARVKKLLAAGVVSAMTCMVKTESPVLTNSCRELLSRVFLALVEEVEDRGTVVAQGGGKALLPLALEGTDVGQTKAAQALAKLTITSNPEMTFPGERIYEVVRPLVSLLHLSCSGLQNFEALMALTNLAGISERLRQKILKEKAVPMIEGYMFEEHEMIRRAATECMCNLAMSKEVQDLFEAQGNDRLKLLVLYSGEDDELLRRAAAGGLAMLTSMRPSLCSRIPQVTTHWLEILQALLLSPNPELQHRGTVVVLNMMESSKEIASTLMESEVLEILSVLAKGEESPVTRAAAACLEKAVEYRLIQPNQDGE.

Residues 1–25 (MTVSGPGTPEPRPSDPGASSAEELR) are disordered. TPR repeat units follow at residues 21–54 (AEELRKEGNELFKCGDYEGALTAYTQALSLGATP), 58–91 (AILHRNRAACHLKLEDYSKAESEASKAIEKDGGD), and 92–125 (VKALYRRSQALEKLGRLDQAVLDLKRCVSLEPKN). K70 carries the N6-acetyllysine modification. Position 483 is an N6-acetyllysine (K483).

In terms of assembly, interacts with PGR isoforms A and B as well as with NR3C1 in the absence of ligand, and with HSP90AB1. Binding to HSP90AB1 involves 2 UNC45A monomers per HSP90AB1 dimer.

The protein localises to the cytoplasm. Its subcellular location is the perinuclear region. It is found in the nucleus. Its function is as follows. May act as co-chaperone for HSP90 (Potential). Prevents the stimulation of HSP90AB1 ATPase activity by AHSA1. Positive factor in promoting PGR function in the cell. May be necessary for proper folding of myosin (Potential). Necessary for normal cell proliferation. Necessary for normal myotube formation and myosin accumulation during muscle cell development. May play a role in erythropoiesis in stroma cells in the spleen. The polypeptide is Protein unc-45 homolog A (Unc45a) (Rattus norvegicus (Rat)).